We begin with the raw amino-acid sequence, 246 residues long: tRNA pseudouridine synthase A (246 aa).

Asp52 acts as the Nucleophile in catalysis. Tyr111 is a substrate binding site.

The protein belongs to the tRNA pseudouridine synthase TruA family. Homodimer.

The enzyme catalyses uridine(38/39/40) in tRNA = pseudouridine(38/39/40) in tRNA. In terms of biological role, formation of pseudouridine at positions 38, 39 and 40 in the anticodon stem and loop of transfer RNAs. This Borreliella burgdorferi (strain ZS7) (Borrelia burgdorferi) protein is tRNA pseudouridine synthase A.